The sequence spans 784 residues: Toll-like receptor 2 (784 aa).

A signal peptide spans M1–E20. Residues E21–R587 lie on the Extracellular side of the membrane. A disulfide bond links C30 and C36. 19 LRR repeats span residues V54–N77, L78–R101, L102–S125, L126–K150, L151–F175, L176–N199, V200–S223, V224–L250, I251–G278, L279–K308, V309–R337, V338–S361, L362–S388, L389–N414, L415–K437, M438–K457, T458–Q478, L479–M500, and L501–T524. N-linked (GlcNAc...) asparagine glycosylation occurs at N114. Residue N199 is glycosylated (N-linked (GlcNAc...) asparagine). C353 and C382 are joined by a disulfide. Residue N414 is glycosylated (N-linked (GlcNAc...) asparagine). Residues C432 and C454 are joined by a disulfide bond. N-linked (GlcNAc...) asparagine glycosylation occurs at N442. The LRRCT domain maps to L525–R579. Residues A588–L608 form a helical membrane-spanning segment. Topologically, residues C609–S784 are cytoplasmic. A TIR domain is found at I639–I782. Residue K754 forms a Glycyl lysine isopeptide (Lys-Gly) (interchain with G-Cter in ubiquitin) linkage. Residues Y761–L778 carry the ATG16L1-binding motif motif.

Belongs to the Toll-like receptor family. Interacts with LY96, TLR1 and TLR6 (via extracellular domain). TLR2 seems to exist in heterodimers with either TLR1 or TLR6 before stimulation by the ligand. The heterodimers form bigger oligomers in response to their corresponding ligands as well as further heterotypic associations with other receptors such as CD14 and/or CD36. Binds MYD88 (via TIR domain). Interacts with TICAM1. Interacts with CNPY3. Interacts with ATG16L1. Interacts with PPP1R11. Interacts with TICAM2. Interacts with TIRAP. In terms of processing, ubiquitinated at Lys-754 by PPP1R11, leading to its degradation. Deubiquitinated by USP2. Glycosylation of Asn-442 is critical for secretion of the N-terminal ectodomain of TLR2.

It is found in the membrane. The protein localises to the cytoplasmic vesicle. Its subcellular location is the phagosome membrane. The protein resides in the membrane raft. In terms of biological role, cooperates with LY96 to mediate the innate immune response to bacterial lipoproteins and other microbial cell wall components. Cooperates with TLR1 or TLR6 to mediate the innate immune response to bacterial lipoproteins or lipopeptides. Acts via MYD88 and TRAF6, leading to NF-kappa-B activation, cytokine secretion and the inflammatory response. May also promote apoptosis in response to lipoproteins. Forms activation clusters composed of several receptors depending on the ligand, these clusters trigger signaling from the cell surface and subsequently are targeted to the Golgi in a lipid-raft dependent pathway. Forms the cluster TLR2:TLR6:CD14:CD36 in response to diacylated lipopeptides and TLR2:TLR1:CD14 in response to triacylated lipopeptides. The protein is Toll-like receptor 2 (TLR2) of Macaca mulatta (Rhesus macaque).